Reading from the N-terminus, the 408-residue chain is Acetate kinase (408 aa).

Asparagine 10 lines the Mg(2+) pocket. Lysine 17 lines the ATP pocket. Arginine 96 contacts substrate. Aspartate 153 acts as the Proton donor/acceptor in catalysis. ATP is bound by residues 213–217 (HLGNG) and 288–290 (DLR). Position 393 (glutamate 393) interacts with Mg(2+).

It belongs to the acetokinase family. As to quaternary structure, homodimer. Mg(2+) is required as a cofactor. The cofactor is Mn(2+).

It localises to the cytoplasm. It carries out the reaction acetate + ATP = acetyl phosphate + ADP. It participates in metabolic intermediate biosynthesis; acetyl-CoA biosynthesis; acetyl-CoA from acetate: step 1/2. In terms of biological role, catalyzes the formation of acetyl phosphate from acetate and ATP. Can also catalyze the reverse reaction. The protein is Acetate kinase of Borrelia recurrentis (strain A1).